We begin with the raw amino-acid sequence, 177 residues long: SPbeta prophage-derived uncharacterized N-acetyltransferase YokL (177 aa).

Residues 11-170 (LTLRAIQPED…DGICFGMTRE (160 aa)) form the N-acetyltransferase domain.

This sequence belongs to the acetyltransferase family.

The protein is SPbeta prophage-derived uncharacterized N-acetyltransferase YokL (yokL) of Bacillus subtilis (strain 168).